A 232-amino-acid polypeptide reads, in one-letter code: Rho-related GTP-binding protein Rho6 (232 aa).

Residues 23-28 (QCGKTA), 38-45 (YPETYVPT), 67-71 (DTSGS), 125-128 (CKTD), and 169-170 (AF) each bind GTP. An Effector region motif is present at residues 42–50 (YVPTVFENY). Cysteine 229 is modified (cysteine methyl ester). A lipid anchor (S-geranylgeranyl cysteine) is attached at cysteine 229. Positions 230-232 (SIM) are cleaved as a propeptide — removed in mature form.

Belongs to the small GTPase superfamily. Rho family. As to quaternary structure, binds GRB7 and PLXNB1. Interacts with PLXNA2. Interacts with UBXD5.

The protein localises to the cell membrane. Its subcellular location is the cytoplasm. It localises to the cytoskeleton. Functionally, lacks intrinsic GTPase activity. Has a low affinity for GDP, and constitutively binds GTP. Controls rearrangements of the actin cytoskeleton. Induces the Rac-dependent neuritic process formation in part by disruption of the cortical actin filaments. Causes the formation of many neuritic processes from the cell body with disruption of the cortical actin filaments. The protein is Rho-related GTP-binding protein Rho6 (Rnd1) of Mus musculus (Mouse).